We begin with the raw amino-acid sequence, 217 residues long: Large ribosomal subunit protein uL4 (217 aa).

Positions 58-90 are disordered; that stretch reads TAATKGRSDVSGGGKKPWRQKGTGRARSGTSRS.

The protein belongs to the universal ribosomal protein uL4 family. As to quaternary structure, part of the 50S ribosomal subunit.

One of the primary rRNA binding proteins, this protein initially binds near the 5'-end of the 23S rRNA. It is important during the early stages of 50S assembly. It makes multiple contacts with different domains of the 23S rRNA in the assembled 50S subunit and ribosome. Functionally, forms part of the polypeptide exit tunnel. This Syntrophus aciditrophicus (strain SB) protein is Large ribosomal subunit protein uL4.